Consider the following 331-residue polypeptide: High-affinity nickel-transport protein NixA (331 aa).

A run of 7 helical transmembrane segments spans residues 3-23 (LWFP…ALLF), 77-97 (MGHS…IAWA), 110-130 (VVGT…NAII), 184-204 (PVGF…LLAL), 213-233 (VVGM…FDTL), 259-279 (ITAL…FQVI), and 302-322 (DLGY…FFLW).

It belongs to the NiCoT transporter (TC 2.A.52) family.

The protein resides in the cell inner membrane. Functionally, high-affinity nickel intake protein. Imports nickel ions in an energy-dependent fashion. Necessary for the expression of catalytically active urease. The chain is High-affinity nickel-transport protein NixA (nixA) from Helicobacter pylori (strain J99 / ATCC 700824) (Campylobacter pylori J99).